We begin with the raw amino-acid sequence, 746 residues long: Double-stranded RNA-specific editase B2 (746 aa).

Disordered stretches follow at residues 1 to 36 and 50 to 105; these read MASV…KDKV and SPGT…PLEE. The segment covering 20-34 has biased composition (basic residues); sequence CKSKRRRRRRSKRKD. An R-domain (ssRNA-binding) region spans residues 23 to 35; it reads KRRRRRRSKRKDK. 2 DRBM domains span residues 126–192 and 284–348; these read TPKN…SFVQ and NPVV…ALFD. The region spanning 415–742 is the A to I editase domain; that stretch reads VLSSGTKCIS…VRKPPEQDQF (328 aa). His439 serves as a coordination point for Zn(2+). Glu441 acts as the Proton donor in catalysis. Cys497 and Cys562 together coordinate Zn(2+).

Brain specific.

It localises to the nucleus. Its function is as follows. Lacks editing activity. It prevents the binding of other ADAR enzymes to targets in vitro, and decreases the efficiency of these enzymes. Capable of binding to dsRNA but also to ssRNA. This is Double-stranded RNA-specific editase B2 (Adarb2) from Rattus norvegicus (Rat).